The chain runs to 170 residues: Lipoprotein signal peptidase (170 aa).

4 helical membrane-spanning segments follow: residues 11–31 (LSWL…KFYF), 41–61 (IVVI…AAFS), 69–89 (WQRW…VVWL), and 95–115 (NETW…GNLY). Active-site residues include aspartate 125 and aspartate 144. The chain crosses the membrane as a helical span at residues 136 to 156 (YFPAFNFADSAITVGAVMLAL).

The protein belongs to the peptidase A8 family.

The protein resides in the cell inner membrane. The enzyme catalyses Release of signal peptides from bacterial membrane prolipoproteins. Hydrolyzes -Xaa-Yaa-Zaa-|-(S,diacylglyceryl)Cys-, in which Xaa is hydrophobic (preferably Leu), and Yaa (Ala or Ser) and Zaa (Gly or Ala) have small, neutral side chains.. It functions in the pathway protein modification; lipoprotein biosynthesis (signal peptide cleavage). In terms of biological role, this protein specifically catalyzes the removal of signal peptides from prolipoproteins. The chain is Lipoprotein signal peptidase from Pseudomonas fluorescens (strain Pf0-1).